The chain runs to 163 residues: uncharacterized protein (163 aa).

The protein belongs to the IMPDH/GMPR family.

This is an uncharacterized protein from Haemophilus influenzae (strain ATCC 51907 / DSM 11121 / KW20 / Rd).